The sequence spans 466 residues: Small RNA degrading nuclease 2 (466 aa).

The 157-residue stretch at 142-298 (MIAIDCEMVL…HDAEAAMKLV (157 aa)) folds into the Exonuclease domain. A disordered region spans residues 426 to 466 (EENNASSKKRKRENHSKGTRDRRRCKPLSRRKQRSNVKRRR). Basic residues predominate over residues 445 to 466 (RDRRRCKPLSRRKQRSNVKRRR).

Belongs to the REXO1/REXO3 family.

The protein localises to the nucleus. Its function is as follows. 3'-5' exonuclease degrading single-stranded small RNAs. The chain is Small RNA degrading nuclease 2 (SDN2) from Arabidopsis thaliana (Mouse-ear cress).